We begin with the raw amino-acid sequence, 363 residues long: Dihydroorotate dehydrogenase (quinone) (363 aa).

Residues 62–66 and threonine 86 contribute to the FMN site; that span reads AGYDK. Lysine 66 contributes to the substrate binding site. 111 to 115 provides a ligand contact to substrate; sequence NRLGF. Residues asparagine 139 and asparagine 170 each coordinate FMN. Position 170 (asparagine 170) interacts with substrate. The active-site Nucleophile is serine 173. Residue asparagine 175 coordinates substrate. Residues lysine 215 and serine 243 each contribute to the FMN site. 244-245 serves as a coordination point for substrate; the sequence is NT. FMN contacts are provided by residues glycine 266, glycine 295, and 316 to 317; that span reads YS.

It belongs to the dihydroorotate dehydrogenase family. Type 2 subfamily. As to quaternary structure, monomer. FMN is required as a cofactor.

It is found in the cell membrane. It catalyses the reaction (S)-dihydroorotate + a quinone = orotate + a quinol. The protein operates within pyrimidine metabolism; UMP biosynthesis via de novo pathway; orotate from (S)-dihydroorotate (quinone route): step 1/1. Catalyzes the conversion of dihydroorotate to orotate with quinone as electron acceptor. The protein is Dihydroorotate dehydrogenase (quinone) of Agrobacterium fabrum (strain C58 / ATCC 33970) (Agrobacterium tumefaciens (strain C58)).